The following is a 39-amino-acid chain: Omega-theraphotoxin-Asp1a (39 aa).

3 disulfide bridges follow: cysteine 4–cysteine 25, cysteine 8–cysteine 31, and cysteine 17–cysteine 36.

As to expression, expressed by the venom gland.

The protein localises to the secreted. Toxin that inhibits voltage-gated calcium channels in rat cerebellar granule cells (IC(50)&lt;200 nM). Is lethal to cockroaches. This chain is Omega-theraphotoxin-Asp1a, found in Aphonopelma sp. (American tarantula).